Reading from the N-terminus, the 230-residue chain is Exosome complex component Rrp4 (230 aa).

The S1 motif domain maps to 60–129 (NDKVIGKVID…EIKESWLSLK (70 aa)). The 59-residue stretch at 137–195 (EEGSIIYIKAPKVPRVIGKAGNMINMIKSETNTKIIVGQNGLIWIDGEPENVDLAINAI) folds into the KH domain.

The protein belongs to the RRP4 family. As to quaternary structure, component of the archaeal exosome complex. Forms a trimer of Rrp4 and/or Csl4 subunits. The trimer associates with a hexameric ring-like arrangement composed of 3 Rrp41-Rrp42 heterodimers.

It localises to the cytoplasm. In terms of biological role, non-catalytic component of the exosome, which is a complex involved in RNA degradation. Increases the RNA binding and the efficiency of RNA degradation. Confers strong poly(A) specificity to the exosome. In Picrophilus torridus (strain ATCC 700027 / DSM 9790 / JCM 10055 / NBRC 100828 / KAW 2/3), this protein is Exosome complex component Rrp4.